A 29-amino-acid polypeptide reads, in one-letter code: Cytochrome b6-f complex subunit 8 (29 aa).

Residues 3-23 traverse the membrane as a helical segment; sequence IVSIAWAALMVVFTFSLSLVV.

The protein belongs to the PetN family. As to quaternary structure, the 4 large subunits of the cytochrome b6-f complex are cytochrome b6, subunit IV (17 kDa polypeptide, PetD), cytochrome f and the Rieske protein, while the 4 small subunits are PetG, PetL, PetM and PetN. The complex functions as a dimer.

Its subcellular location is the plastid. It is found in the chloroplast thylakoid membrane. Functionally, component of the cytochrome b6-f complex, which mediates electron transfer between photosystem II (PSII) and photosystem I (PSI), cyclic electron flow around PSI, and state transitions. The protein is Cytochrome b6-f complex subunit 8 of Angiopteris evecta (Mule's foot fern).